The primary structure comprises 198 residues: Ribosome maturation factor RimM (198 aa).

Residues 92-168 form the PRC barrel domain; that stretch reads DDEYYHADLI…IELPAEIEGE (77 aa). Acidic residues predominate over residues 163 to 172; the sequence is AEIEGEDQDS. Residues 163 to 198 are disordered; that stretch reads AEIEGEDQDSSDNAGSPEGDAAASNSARHPRESGDP.

The protein belongs to the RimM family. Binds ribosomal protein uS19.

It is found in the cytoplasm. In terms of biological role, an accessory protein needed during the final step in the assembly of 30S ribosomal subunit, possibly for assembly of the head region. Essential for efficient processing of 16S rRNA. May be needed both before and after RbfA during the maturation of 16S rRNA. It has affinity for free ribosomal 30S subunits but not for 70S ribosomes. This is Ribosome maturation factor RimM from Bradyrhizobium sp. (strain BTAi1 / ATCC BAA-1182).